The primary structure comprises 685 residues: DNA-directed RNA polymerase subunit beta' (685 aa).

Positions 69, 71, 87, and 90 each coordinate Zn(2+). Mg(2+) contacts are provided by Asp-489, Asp-491, and Asp-493.

Belongs to the RNA polymerase beta' chain family. RpoC1 subfamily. In terms of assembly, in plastids the minimal PEP RNA polymerase catalytic core is composed of four subunits: alpha, beta, beta', and beta''. When a (nuclear-encoded) sigma factor is associated with the core the holoenzyme is formed, which can initiate transcription. Mg(2+) is required as a cofactor. The cofactor is Zn(2+).

It is found in the plastid. The protein localises to the chloroplast. It catalyses the reaction RNA(n) + a ribonucleoside 5'-triphosphate = RNA(n+1) + diphosphate. Functionally, DNA-dependent RNA polymerase catalyzes the transcription of DNA into RNA using the four ribonucleoside triphosphates as substrates. This is DNA-directed RNA polymerase subunit beta' from Buxus microphylla (Littleleaf boxwood).